The sequence spans 464 residues: ATP-dependent protease ATPase subunit HslU (464 aa).

ATP contacts are provided by residues Val18, 60–65 (GVGKTE), Asp277, Glu342, and Arg414.

It belongs to the ClpX chaperone family. HslU subfamily. In terms of assembly, a double ring-shaped homohexamer of HslV is capped on each side by a ring-shaped HslU homohexamer. The assembly of the HslU/HslV complex is dependent on binding of ATP.

Its subcellular location is the cytoplasm. ATPase subunit of a proteasome-like degradation complex; this subunit has chaperone activity. The binding of ATP and its subsequent hydrolysis by HslU are essential for unfolding of protein substrates subsequently hydrolyzed by HslV. HslU recognizes the N-terminal part of its protein substrates and unfolds these before they are guided to HslV for hydrolysis. This Lactobacillus delbrueckii subsp. bulgaricus (strain ATCC BAA-365 / Lb-18) protein is ATP-dependent protease ATPase subunit HslU.